We begin with the raw amino-acid sequence, 234 residues long: MFLNNLPALTLGTAIPWDLVQQSFWPILSGGIYYTIPLTILSFIFGMILALITALARMSKVRPLRWVFSVYVSAIRGTPLLVQLFIIFYLFPAFNVTLDPFPSAVIAFSLNVGAYASEIIRASILSVPKGQWEAGYTIGMTHQKTLFRVILPQAFRVSIPPLSNTFISLIKDTSLASQILVAELFRKAQEIGARNLDQILVIYIEAAFIYWIICFLLSLVQHVIERRLDRYVAK.

A run of 5 helical transmembrane segments spans residues 8-28 (ALTL…WPIL), 36-56 (IPLT…TALA), 78-98 (TPLL…NVTL), 100-120 (PFPS…SEII), and 199-219 (ILVI…LLSL). In terms of domain architecture, ABC transmembrane type-1 spans 32-221 (IYYTIPLTIL…IICFLLSLVQ (190 aa)).

Belongs to the binding-protein-dependent transport system permease family. In terms of assembly, the complex is composed of two ATP-binding proteins (TcyC), two transmembrane proteins (TcyB) and a solute-binding protein (TcyA).

It is found in the cell membrane. In terms of biological role, part of the ABC transporter complex TcyABC involved in L-cystine import. Probably responsible for the translocation of the substrate across the membrane. This Bacillus subtilis (strain 168) protein is L-cystine transport system permease protein TcyB (tcyB).